A 341-amino-acid polypeptide reads, in one-letter code: Putative amino-acid ABC transporter-binding protein YhdW (341 aa).

The N-terminal stretch at 1 to 19 (MKKMMIATLAAASVLLAVA) is a signal peptide.

This sequence belongs to the bacterial solute-binding protein 3 family.

The protein localises to the periplasm. Functionally, probably part of the binding-protein-dependent transport system YdhWXYZ for an amino acid. The protein is Putative amino-acid ABC transporter-binding protein YhdW (yhdW) of Escherichia coli (strain K12).